A 360-amino-acid chain; its full sequence is Phenylalanine--tRNA ligase alpha subunit (360 aa).

Mg(2+) is bound at residue E260.

The protein belongs to the class-II aminoacyl-tRNA synthetase family. Phe-tRNA synthetase alpha subunit type 1 subfamily. Tetramer of two alpha and two beta subunits. It depends on Mg(2+) as a cofactor.

The protein resides in the cytoplasm. The enzyme catalyses tRNA(Phe) + L-phenylalanine + ATP = L-phenylalanyl-tRNA(Phe) + AMP + diphosphate + H(+). The sequence is that of Phenylalanine--tRNA ligase alpha subunit from Methylocella silvestris (strain DSM 15510 / CIP 108128 / LMG 27833 / NCIMB 13906 / BL2).